A 313-amino-acid chain; its full sequence is Probable cell division protein WhiA (313 aa).

Positions 278 to 311 (SLKELGKLLDPPLSKSGVNHRLRRIKSIANEIRG) form a DNA-binding region, H-T-H motif.

It belongs to the WhiA family.

Its function is as follows. Involved in cell division and chromosome segregation. The protein is Probable cell division protein WhiA of Halothermothrix orenii (strain H 168 / OCM 544 / DSM 9562).